The chain runs to 123 residues: Small ribosomal subunit protein uS12 (123 aa).

3-methylthioaspartic acid is present on aspartate 89.

It belongs to the universal ribosomal protein uS12 family. In terms of assembly, part of the 30S ribosomal subunit. Contacts proteins S8 and S17. May interact with IF1 in the 30S initiation complex.

Functionally, with S4 and S5 plays an important role in translational accuracy. In terms of biological role, interacts with and stabilizes bases of the 16S rRNA that are involved in tRNA selection in the A site and with the mRNA backbone. Located at the interface of the 30S and 50S subunits, it traverses the body of the 30S subunit contacting proteins on the other side and probably holding the rRNA structure together. The combined cluster of proteins S8, S12 and S17 appears to hold together the shoulder and platform of the 30S subunit. This chain is Small ribosomal subunit protein uS12, found in Rhodopseudomonas palustris (strain BisA53).